The sequence spans 403 residues: RUN domain-containing protein 3B (403 aa).

Positions 1–20 (MASRSLGGLSGSRGGGKKSL) are disordered. Arg13 is subject to Omega-N-methylarginine. The 133-residue stretch at 53 to 185 (DDSSPEFNNF…IDFSFCLKGE (133 aa)) folds into the RUN domain. A disordered region spans residues 207-232 (SDSISSDEEELRTFGSSDSEGSTPEN). Ser211 and Ser212 each carry phosphoserine. Polar residues predominate over residues 220–231 (FGSSDSEGSTPE). Residues 296–321 (AHKLEKEQLEYIIVELQDQLKSYQSL) are a coiled coil.

It belongs to the RUNDC3 family. Interacts with RAP2A.

The protein is RUN domain-containing protein 3B (Rundc3b) of Rattus norvegicus (Rat).